Reading from the N-terminus, the 90-residue chain is MIQLSERQQDLLQVAEKYEQCHIEFYTAQSRLFGTEIMGEVVKTSLGTLKIAHPEEDLFEVALAYLASKKDILTAQERKDVLFYIQNNLC.

The chain is E22 protein (43) from Bacillus subtilis (Bacteriophage SP01).